A 24-amino-acid polypeptide reads, in one-letter code: Coenzyme PQQ synthesis protein A (24 aa).

The segment at residues 16–20 is a cross-link (pyrroloquinoline quinone (Glu-Tyr)); sequence EITMY.

This sequence belongs to the PqqA family.

It participates in cofactor biosynthesis; pyrroloquinoline quinone biosynthesis. Its function is as follows. Required for coenzyme pyrroloquinoline quinone (PQQ) biosynthesis. PQQ is probably formed by cross-linking a specific glutamate to a specific tyrosine residue and excising these residues from the peptide. The sequence is that of Coenzyme PQQ synthesis protein A from Cupriavidus taiwanensis (strain DSM 17343 / BCRC 17206 / CCUG 44338 / CIP 107171 / LMG 19424 / R1) (Ralstonia taiwanensis (strain LMG 19424)).